Consider the following 476-residue polypeptide: 3-isopropylmalate dehydratase large subunit (476 aa).

3 residues coordinate [4Fe-4S] cluster: C357, C417, and C420.

Belongs to the aconitase/IPM isomerase family. LeuC type 1 subfamily. In terms of assembly, heterodimer of LeuC and LeuD. It depends on [4Fe-4S] cluster as a cofactor.

It carries out the reaction (2R,3S)-3-isopropylmalate = (2S)-2-isopropylmalate. It participates in amino-acid biosynthesis; L-leucine biosynthesis; L-leucine from 3-methyl-2-oxobutanoate: step 2/4. Catalyzes the isomerization between 2-isopropylmalate and 3-isopropylmalate, via the formation of 2-isopropylmaleate. The chain is 3-isopropylmalate dehydratase large subunit from Mycolicibacterium paratuberculosis (strain ATCC BAA-968 / K-10) (Mycobacterium paratuberculosis).